We begin with the raw amino-acid sequence, 222 residues long: UPF0502 protein XAC4278 (222 aa).

It belongs to the UPF0502 family.

This Xanthomonas axonopodis pv. citri (strain 306) protein is UPF0502 protein XAC4278.